Here is a 221-residue protein sequence, read N- to C-terminus: UPF0502 protein CPS_0106 (221 aa).

Belongs to the UPF0502 family.

This is UPF0502 protein CPS_0106 from Colwellia psychrerythraea (strain 34H / ATCC BAA-681) (Vibrio psychroerythus).